A 172-amino-acid chain; its full sequence is Adenine phosphoribosyltransferase (172 aa).

This sequence belongs to the purine/pyrimidine phosphoribosyltransferase family. Homodimer.

The protein resides in the cytoplasm. The enzyme catalyses AMP + diphosphate = 5-phospho-alpha-D-ribose 1-diphosphate + adenine. Its pathway is purine metabolism; AMP biosynthesis via salvage pathway; AMP from adenine: step 1/1. Its function is as follows. Catalyzes a salvage reaction resulting in the formation of AMP, that is energically less costly than de novo synthesis. The chain is Adenine phosphoribosyltransferase from Pediococcus pentosaceus (strain ATCC 25745 / CCUG 21536 / LMG 10740 / 183-1w).